Reading from the N-terminus, the 113-residue chain is Large ribosomal subunit protein uL22 (113 aa).

It belongs to the universal ribosomal protein uL22 family. In terms of assembly, part of the 50S ribosomal subunit.

Its function is as follows. This protein binds specifically to 23S rRNA; its binding is stimulated by other ribosomal proteins, e.g. L4, L17, and L20. It is important during the early stages of 50S assembly. It makes multiple contacts with different domains of the 23S rRNA in the assembled 50S subunit and ribosome. In terms of biological role, the globular domain of the protein is located near the polypeptide exit tunnel on the outside of the subunit, while an extended beta-hairpin is found that lines the wall of the exit tunnel in the center of the 70S ribosome. In Bacillus pumilus (strain SAFR-032), this protein is Large ribosomal subunit protein uL22.